The following is an 84-amino-acid chain: Beta-defensin 119 (84 aa).

Positions 1 to 21 (MKLLYLFLAILLAIEEPVISG) are cleaved as a signal peptide. Intrachain disulfides connect C28–C55, C35–C49, and C39–C56.

It belongs to the beta-defensin family.

It localises to the secreted. Functionally, has antibacterial activity. In Gorilla gorilla gorilla (Western lowland gorilla), this protein is Beta-defensin 119 (DEFB119).